A 475-amino-acid polypeptide reads, in one-letter code: Peroxisome proliferator-activated receptor gamma (475 aa).

Ser-82 carries the post-translational modification Phosphoserine; by MAPK. The nuclear receptor DNA-binding region spans 106 to 180 (AIECRVCSDK…VGMSHNAIRF (75 aa)). NR C4-type zinc fingers lie at residues 109–129 (CRVC…CEGC) and 146–168 (CDLN…FQKC). Residues 175-250 (HNAIRFGRMP…DKSPFVIYDM (76 aa)) form an interaction with FAM120B region. In terms of domain architecture, NR LBD spans 208–473 (DLRALAKHLY…HPLLQEIYKD (266 aa)). Lys-222 participates in a covalent cross-link: Glycyl lysine isopeptide (Lys-Gly) (interchain with G-Cter in ubiquitin). Residues 465–473 (PLLQEIYKD) carry the 9aaTAD motif.

Belongs to the nuclear hormone receptor family. NR1 subfamily. As to quaternary structure, interacts with FOXO1 (acetylated form). Heterodimer with other nuclear receptors, such as RXRA. The heterodimer with the retinoic acid receptor RXRA is called adipocyte-specific transcription factor ARF6. Interacts with NCOA6 coactivator, leading to a strong increase in transcription of target genes. Interacts with coactivator PPARBP, leading to a mild increase in transcription of target genes. Interacts with NOCA7 in a ligand-inducible manner. Interacts with NCOA1 and NCOA2 LXXLL motifs. Interacts with ASXL1, ASXL2, DNTTIP2, FAM120B, MAP2K1/MEK1, NR0B2, PDPK1, PRDM16, PRMT2 and TGFB1I1. Interacts (when activated by agonist) with PPP5C. Interacts with HELZ2 and THRAP3; the interaction stimulates the transcriptional activity of PPARG. Interacts with PER2, the interaction is ligand dependent and blocks PPARG recruitment to target promoters. Interacts with NOCT. Interacts with ACTN4. Interacts (when in the liganded conformation) with GPS2. Interacts with CRY1 and CRY2 in a ligand-dependent manner. In the absence of hormonal ligand, interacts with TACC1. In macrophages, interacts with PAQR3 and STUB1; the interactions promote PPARG poylubiquitination and STUB1-mediated degradation. In terms of processing, phosphorylated at basal conditions and dephosphorylated when treated with the ligand. May be dephosphorylated by PPP5C. The phosphorylated form may be inactive and dephosphorylation induces adipogenic activity. Ubiquitinated by E3 ubiquitin-protein ligase complex containing FBXO9; leading to proteasomal degradation. Ubiquitinated at Lys-222 by TRIM55 leading to proteasomal degradation. Ubiquitinated by E3 ubiquitin-protein ligase STUB1/CHIP; leading to proteasomal degradation.

Its subcellular location is the nucleus. The protein localises to the cytoplasm. With respect to regulation, PDPK1 activates its transcriptional activity independently of its kinase activity. In terms of biological role, nuclear receptor that binds peroxisome proliferators such as hypolipidemic drugs and fatty acids. Once activated by a ligand, the nuclear receptor binds to DNA specific PPAR response elements (PPRE) and modulates the transcription of its target genes, such as acyl-CoA oxidase. It therefore controls the peroxisomal beta-oxidation pathway of fatty acids. Key regulator of adipocyte differentiation and glucose homeostasis. ARF6 acts as a key regulator of the tissue-specific adipocyte P2 (aP2) enhancer. Acts as a critical regulator of gut homeostasis by suppressing NF-kappa-B-mediated pro-inflammatory responses. Plays a role in the regulation of cardiovascular circadian rhythms by regulating the transcription of BMAL1 in the blood vessels. The chain is Peroxisome proliferator-activated receptor gamma (PPARG) from Oryctolagus cuniculus (Rabbit).